Reading from the N-terminus, the 704-residue chain is Glycogen [starch] synthase, liver (704 aa).

S8 and S11 each carry phosphoserine. Position 40 (K40) interacts with UDP. UDP-alpha-D-glucose-binding residues include H205 and R211. Residues H291, E292, Q294, H297, and K301 each contribute to the alpha-D-glucose 6-phosphate site. R331 provides a ligand contact to UDP. Residue R331 coordinates UDP-alpha-D-glucose. Alpha-D-glucose 6-phosphate is bound at residue H501. E510, W512, and G513 together coordinate UDP-alpha-D-glucose. Residue T515 coordinates UDP. Alpha-D-glucose 6-phosphate-binding residues include R582 and R586. The disordered stretch occupies residues K620–N704. Phosphoserine is present on S627. Phosphoserine; by GSK3-alpha and GSK3-beta is present on residues S641, S645, S649, and S653. Positions S647–S657 are enriched in low complexity. Position 657 is a phosphoserine; by CK2 (S657). Acidic residues predominate over residues V659 to A675. At S684 the chain carries Phosphoserine.

This sequence belongs to the glycosyltransferase 3 family. In terms of assembly, part of the glycogen synthase (GS)-glycogenin complex, a heterooctamer composed of a tetramer of GS and 2 dimers of glycogenin, where each GS protomer binds to one glycogenin subunit (via glycogenin C-terminus); the GS tetramer may dissociate from glycogenin dimers to continue glycogen polymerization on its own. May also form a heterooctamer complex with GYG1 (via GYG1 C-terminus). Primed phosphorylation at Ser-657 (site 5) by CSNK2A1 and CSNK2A2 is required for inhibitory phosphorylation at Ser-641 (site 3a), Ser-645 (site 3b), Ser-649 (site 3c) and Ser-653 (site 4) by GSK3A an GSK3B. Dephosphorylation at Ser-641 and Ser-645 by PP1 activates the enzyme. Phosphorylation at Ser-8 is not required for interaction with GYG1. Interaction with GYG1 does not regulate the phosphorylation at Ser-8 and Ser-641. Specifically expressed in liver (at protein level).

The enzyme catalyses [(1-&gt;4)-alpha-D-glucosyl](n) + UDP-alpha-D-glucose = [(1-&gt;4)-alpha-D-glucosyl](n+1) + UDP + H(+). The protein operates within glycan biosynthesis; glycogen biosynthesis. With respect to regulation, allosteric activation by glucose-6-phosphate. Phosphorylation reduces the activity towards UDP-glucose. When in the non-phosphorylated state, glycogen synthase does not require glucose-6-phosphate as an allosteric activator; when phosphorylated it does. In terms of biological role, glycogen synthase participates in the glycogen biosynthetic process along with glycogenin and glycogen branching enzyme. Extends the primer composed of a few glucose units formed by glycogenin by adding new glucose units to it. In this context, glycogen synthase transfers the glycosyl residue from UDP-Glc to the non-reducing end of alpha-1,4-glucan. The sequence is that of Glycogen [starch] synthase, liver from Rattus norvegicus (Rat).